We begin with the raw amino-acid sequence, 442 residues long: uncharacterized protein (442 aa).

This is an uncharacterized protein from Sputnik virophage.